Reading from the N-terminus, the 165-residue chain is CDP-archaeol synthase (165 aa).

Helical transmembrane passes span 41 to 61, 72 to 92, 103 to 123, and 127 to 147; these read GLIC…WLVG, ILSV…KSFI, AWPV…TIIF, and WFFA…TPVL.

Belongs to the CDP-archaeol synthase family. It depends on Mg(2+) as a cofactor.

The protein localises to the cell membrane. It catalyses the reaction 2,3-bis-O-(geranylgeranyl)-sn-glycerol 1-phosphate + CTP + H(+) = CDP-2,3-bis-O-(geranylgeranyl)-sn-glycerol + diphosphate. It participates in membrane lipid metabolism; glycerophospholipid metabolism. Its function is as follows. Catalyzes the formation of CDP-2,3-bis-(O-geranylgeranyl)-sn-glycerol (CDP-archaeol) from 2,3-bis-(O-geranylgeranyl)-sn-glycerol 1-phosphate (DGGGP) and CTP. This reaction is the third ether-bond-formation step in the biosynthesis of archaeal membrane lipids. The protein is CDP-archaeol synthase of Methanoregula boonei (strain DSM 21154 / JCM 14090 / 6A8).